A 342-amino-acid polypeptide reads, in one-letter code: MKQLESFEIPRTVIFGPGAISKIHQIVASQKASKILIITGRSVTLQYAKTIADMLTDRSVEVLRYDYIDIEKSGFDLVLGVGGGRPIDMAKVYSYVHKKPLVIVPTSASHDGIASPYVSYTLAQKMIKYGKIMASPIAIVADTSIILNAPSRLLKAGVGDLLGKIIAVRDWKLAHRLKGEEYSEYASHLSLTSYRIVVANAARIKNFVREEDVRVLVKALIGCGVAMGIAGSSRPCSGSEHLFAHAIEIRLEESGGDAIHGELVALGTIIMAYLHGINWRRVKKIAKLVGLPTTLREAGIDYDLAIEALVVAHTLRPDRYTILGDGLSKDAARRAIEATELA.

Residues 84–88 (GRPID) and 106–109 (TSAS) contribute to the NAD(+) site. Asp111 contributes to the substrate binding site. Position 115 (Ser115) interacts with NAD(+). Asp160 is a binding site for substrate. Residues Asp160 and His241 each coordinate Zn(2+). Residue His245 coordinates substrate. Residue His260 coordinates Zn(2+).

This sequence belongs to the glycerol-1-phosphate dehydrogenase family. Homodimer. Requires Zn(2+) as cofactor.

Its subcellular location is the cytoplasm. The enzyme catalyses sn-glycerol 1-phosphate + NAD(+) = dihydroxyacetone phosphate + NADH + H(+). It carries out the reaction sn-glycerol 1-phosphate + NADP(+) = dihydroxyacetone phosphate + NADPH + H(+). The protein operates within membrane lipid metabolism; glycerophospholipid metabolism. In terms of biological role, catalyzes the NAD(P)H-dependent reduction of dihydroxyacetonephosphate (DHAP or glycerone phosphate) to glycerol 1-phosphate (G1P). The G1P thus generated is used as the glycerophosphate backbone of phospholipids in the cellular membranes of Archaea. This chain is Glycerol-1-phosphate dehydrogenase [NAD(P)+], found in Pyrobaculum islandicum (strain DSM 4184 / JCM 9189 / GEO3).